Consider the following 94-residue polypeptide: Small ribosomal subunit protein uS17 (94 aa).

It belongs to the universal ribosomal protein uS17 family. Part of the 30S ribosomal subunit.

One of the primary rRNA binding proteins, it binds specifically to the 5'-end of 16S ribosomal RNA. This is Small ribosomal subunit protein uS17 from Deinococcus geothermalis (strain DSM 11300 / CIP 105573 / AG-3a).